A 211-amino-acid chain; its full sequence is Large ribosomal subunit protein uL3 (211 aa).

The segment at 126–147 (HGQSRGPMAHGSRYHRRPGSMG) is disordered.

It belongs to the universal ribosomal protein uL3 family. Part of the 50S ribosomal subunit. Forms a cluster with proteins L14 and L19.

In terms of biological role, one of the primary rRNA binding proteins, it binds directly near the 3'-end of the 23S rRNA, where it nucleates assembly of the 50S subunit. This chain is Large ribosomal subunit protein uL3, found in Geobacillus thermodenitrificans (strain NG80-2).